Reading from the N-terminus, the 853-residue chain is Auxin response factor 23 (853 aa).

Positions lysine 121 to histidine 141 are disordered. Residues phenylalanine 149 to methionine 251 constitute a DNA-binding region (TF-B3). 2 disordered regions span residues glutamate 422–proline 471 and proline 647–serine 723. The span at proline 425–lysine 455 shows a compositional bias: polar residues. Basic and acidic residues predominate over residues glutamate 672–aspartate 686. The segment covering proline 706–serine 723 has biased composition (polar residues). In terms of domain architecture, PB1 spans arginine 725–glutamate 809. The disordered stretch occupies residues proline 815–cysteine 853. A compositionally biased stretch (polar residues) spans leucine 843–cysteine 853.

Belongs to the ARF family. In terms of assembly, homodimers and heterodimers.

The protein resides in the nucleus. Its function is as follows. Auxin response factors (ARFs) are transcriptional factors that bind specifically to the DNA sequence 5'-TGTCTC-3' found in the auxin-responsive promoter elements (AuxREs). The sequence is that of Auxin response factor 23 (ARF23) from Oryza sativa subsp. indica (Rice).